The primary structure comprises 177 residues: DELTA-stichotoxin-Hmg2b (177 aa).

The segment at 3-12 (ALAGTIIAGA) is plays an important role in the hemolytic activity. The tract at residues 11–30 (GASLGFQILDKVLGELGKVS) is N-terminal region. Phosphocholine is bound by residues Ser54, Val87, Ser105, Pro107, Tyr133, Tyr137, and Tyr138.

Belongs to the actinoporin family. Sea anemone subfamily. As to quaternary structure, octamer or nonamer in membranes. Monomer in the soluble state.

Its subcellular location is the secreted. The protein localises to the nematocyst. It localises to the target cell membrane. Pore-forming protein that forms cations-selective hydrophilic pores of around 1 nm and causes cytolysis. Pore formation is a multi-step process that involves specific recognition of membrane sphingomyelin (but neither cholesterol nor phosphatidylcholine) using aromatic rich region and adjacent phosphocholine (POC) binding site, firm binding to the membrane (mainly driven by hydrophobic interactions) accompanied by the transfer of the N-terminal region to the lipid-water interface and finally pore formation after oligomerization of monomers This toxin shows hemolytic activity. This is DELTA-stichotoxin-Hmg2b from Heteractis magnifica (Magnificent sea anemone).